Here is a 142-residue protein sequence, read N- to C-terminus: Succinate dehydrogenase assembly factor 2, mitochondrial (142 aa).

Belongs to the SDHAF2 family. As to quaternary structure, interacts with the flavoprotein subunit within the SDH catalytic dimer.

Its subcellular location is the mitochondrion matrix. Functionally, plays an essential role in the assembly of succinate dehydrogenase (SDH), an enzyme complex (also referred to as respiratory complex II) that is a component of both the tricarboxylic acid (TCA) cycle and the mitochondrial electron transport chain, and which couples the oxidation of succinate to fumarate with the reduction of ubiquinone (coenzyme Q) to ubiquinol. Required for flavinylation (covalent attachment of FAD) of the flavoprotein subunit of the SDH catalytic dimer. In Debaryomyces hansenii (strain ATCC 36239 / CBS 767 / BCRC 21394 / JCM 1990 / NBRC 0083 / IGC 2968) (Yeast), this protein is Succinate dehydrogenase assembly factor 2, mitochondrial.